The following is a 552-amino-acid chain: Formate--tetrahydrofolate ligase (552 aa).

An ATP-binding site is contributed by 63–70 (TPFGEGKT).

The protein belongs to the formate--tetrahydrofolate ligase family.

It carries out the reaction (6S)-5,6,7,8-tetrahydrofolate + formate + ATP = (6R)-10-formyltetrahydrofolate + ADP + phosphate. The protein operates within one-carbon metabolism; tetrahydrofolate interconversion. The protein is Formate--tetrahydrofolate ligase of Caldicellulosiruptor bescii (strain ATCC BAA-1888 / DSM 6725 / KCTC 15123 / Z-1320) (Anaerocellum thermophilum).